Consider the following 533-residue polypeptide: Calcium uptake protein 1 homolog, mitochondrial (533 aa).

The N-terminal 13 residues, 1-13, are a transit peptide targeting the mitochondrion; the sequence is MLRHNFRSSIFIR. The segment at 127–147 is disordered; that stretch reads PFRPEASQKEESTDSGTEIEV. 3 EF-hand domains span residues 270 to 305, 337 to 358, and 465 to 500; these read TSHA…IMSQ, KDGK…LQHD, and LSDH…RMRR. Ca(2+) contacts are provided by aspartate 283, aspartate 285, asparagine 287, and glutamate 294.

It belongs to the MICU1 family. MICU1 subfamily.

Its subcellular location is the mitochondrion intermembrane space. It localises to the mitochondrion inner membrane. In terms of biological role, calcium sensor of the mitochondrial calcium uniporter (mcu-1) channel, which senses calcium level via its EF-hand domains. At low calcium levels, micu-1 occludes the pore of the mcu-1 channel, preventing mitochondrial calcium uptake. At higher calcium levels, calcium-binding to micu-1 induces a conformational change that weakens mcu-1-micu-1 interactions and moves micu-1 away from the pore, allowing calcium permeation through the mcu-1 channel. Also required to protect against manganese toxicity by preventing manganese uptake by mcu-1. Modulates the activity of the mitochondrial calcium uniporter protein mcu-1 depending on the level of intracellular calcium in PLM touch receptor neurons following axonal injury. The sequence is that of Calcium uptake protein 1 homolog, mitochondrial from Caenorhabditis briggsae.